The chain runs to 384 residues: Transcriptional regulator of the unfolded protein response hacA (384 aa).

Positions 1 to 18 (MTESTFAVETFSMDSMSP) are enriched in polar residues. 2 disordered regions span residues 1–27 (MTES…IPRL) and 41–94 (LVPE…QRRI). Residues 84–94 (KTEDEKEQRRI) are compositionally biased toward basic and acidic residues. A bZIP domain is found at 90–153 (EQRRIERVLR…NRLSQQVAKL (64 aa)). The tract at residues 92–101 (RRIERVLRNR) is basic motif. Positions 106–113 (ISRERKRL) are leucine-zipper. Disordered regions lie at residues 208–256 (SIPF…PSDL) and 331–384 (PDED…AGAQ). Residues 218 to 240 (STTTTTTTTTTTSNNISSTSSTT) show a composition bias toward low complexity.

This sequence belongs to the bZIP family.

Its subcellular location is the nucleus. Functionally, master transcriptional regulator of the unfolded protein response (UPR) that recognizes and binds to the UPR element (UPRE) in the promoter of UPR-regulated genes. Exposure to antifungals and ER-stressing agents initiates the activation of hacA which occurs when a 20 nucleotide fragment is removed from part of the exon-2 and part of intron-2, which in turn promotes the arisen of the DNA binding site motif and a dimer interface domain. Modulates the expression of genes related to cell wall synthesis, ergosterol biosynthesis, pigmentation, heat shock proteins, and the genes coding for mannosyltransferase enzymes. Plays a key role in both response to stress and host-pathogen interaction. The sequence is that of Transcriptional regulator of the unfolded protein response hacA from Trichophyton rubrum (strain ATCC MYA-4607 / CBS 118892) (Athlete's foot fungus).